A 244-amino-acid polypeptide reads, in one-letter code: Phosphatidylinositol phosphate synthase (244 aa).

3 consecutive transmembrane segments (helical) span residues 24 to 42, 49 to 66, and 72 to 91; these read YARA…FLIR, TVTL…LVFY, and FWGT…DGNM. 48 to 51 contributes to the a CDP-1,2-diacyl-sn-glycerol binding site; the sequence is DTVT. 2 residues coordinate Mg(2+): Asp-85 and Asp-88. A CDP-1,2-diacyl-sn-glycerol is bound by residues Gly-89, Arg-93, and Ser-99. The Mg(2+) site is built by Asp-106 and Asp-110. Asp-110 serves as the catalytic Proton acceptor. 3 helical membrane-spanning segments follow: residues 117–137, 174–190, and 196–214; these read IFGG…LCAV, LVIS…HKFG, and VLLP…VTLI.

It belongs to the CDP-alcohol phosphatidyltransferase class-I family. As to quaternary structure, homodimer. Mg(2+) serves as cofactor.

It localises to the cell membrane. It catalyses the reaction a CDP-1,2-diacyl-sn-glycerol + 1D-myo-inositol 3-phosphate = a 1,2-diacyl-sn-glycero-3-phospho-(1D-myo-inositol-3-phosphate) + CMP + H(+). The enzyme catalyses 1,2-di-(9Z-octadecenoyl)-sn-glycero-3-cytidine-5'-diphosphate + 1D-myo-inositol 3-phosphate = 1,2-di-(9Z-octadecenoyl)-sn-glycero-3-phospho-(1D-myo-inositol-3-phosphate) + CMP + H(+). It functions in the pathway phospholipid metabolism; phosphatidylinositol phosphate biosynthesis. Its function is as follows. Catalyzes the conjugation of the 1'-hydroxyl group of D-myo-inositol-3-phosphate (also named L-myo-inositol-1-phosphate) with a lipid tail of cytidine diphosphate diacylglycerol (CDP-DAG), forming phosphatidylinositol phosphate (PIP) and CMP. PIP is a precursor of phosphatidylinositol (PI) which is an essential lipid required for cell wall formation. The chain is Phosphatidylinositol phosphate synthase from Streptomyces avermitilis (strain ATCC 31267 / DSM 46492 / JCM 5070 / NBRC 14893 / NCIMB 12804 / NRRL 8165 / MA-4680).